An 80-amino-acid chain; its full sequence is MCQILLAILAIFLPPIAVLLDVGCNCDLLINILLTCLGIIPGIIHAWYIILCKEKTVVQNIYVQTNDHGTAPPAYSPYSA.

The next 2 helical transmembrane spans lie at 4–24 (ILLA…DVGC) and 32–52 (ILLT…IILC).

The protein belongs to the UPF0057 (PMP3) family.

The protein resides in the membrane. The protein is UPF0057 membrane protein ZK632.10 of Caenorhabditis elegans.